Reading from the N-terminus, the 113-residue chain is RING-box protein 2 (113 aa).

The tract at residues 1-26 (MADVEDGEEPCVLSSHSGSAGSKSGG) is disordered. At A2 the chain carries N-acetylalanine. Zn(2+) is bound by residues C50, C53, C61, C64, C73, C80, H82, H85, C87, C88, C99, and C102. An RING-type zinc finger spans residues 61 to 103 (CLRCQAENKQEDCVVVWGECNHSFHNCCMSLWVKQNNRCPLCQ).

Belongs to the RING-box family. As to quaternary structure, catalytic component of multiple cullin-5-RING E3 ubiquitin-protein ligase complexes (ECS complexes, also named CRL5 complexes) composed of CUL5, Elongin BC (ELOB and ELOC), RNF7/RBX2 and a variable SOCS box domain-containing protein as substrate-specific recognition component. Also interacts (with lower preference) with CUL1, CUL2, CUL3, CUL4A and CUL4B; additional evidence is however required to confirm this result in vivo. Interacts with UBE2F. Interacts with CSNK2B, the interaction is not affected by phosphorylation by CK2. May also interact with DCUN1D1, DCUN1D2, DCUN1D3, DCUN1D4 and DCUN1D5.

The protein resides in the cytoplasm. It is found in the nucleus. It catalyses the reaction S-ubiquitinyl-[E2 ubiquitin-conjugating enzyme]-L-cysteine + [acceptor protein]-L-lysine = [E2 ubiquitin-conjugating enzyme]-L-cysteine + N(6)-ubiquitinyl-[acceptor protein]-L-lysine.. The enzyme catalyses S-[NEDD8-protein]-yl-[E2 NEDD8-conjugating enzyme]-L-cysteine + [cullin]-L-lysine = [E2 NEDD8-conjugating enzyme]-L-cysteine + N(6)-[NEDD8-protein]-yl-[cullin]-L-lysine.. It functions in the pathway protein modification; protein ubiquitination. It participates in protein modification; protein neddylation. Its function is as follows. Catalytic component of multiple cullin-5-RING E3 ubiquitin-protein ligase complexes (ECS complexes), which mediate the ubiquitination and subsequent proteasomal degradation of target proteins. It is thereby involved in various biological processes, such as cell cycle progression, signal transduction and transcription. The functional specificity of the E3 ubiquitin-protein ligase ECS complexes depend on the variable SOCS box-containing substrate recognition component. Within ECS complexes, RNF7/RBX2 recruits the E2 ubiquitination enzyme to the complex via its RING-type and brings it into close proximity to the substrate. Catalytic subunit of various SOCS-containing ECS complexes, such as the ECS(SOCS7) complex, that regulate reelin signaling by mediating ubiquitination and degradation of DAB1. The ECS(SOCS2) complex mediates the ubiquitination and subsequent proteasomal degradation of phosphorylated EPOR and GHR. Promotes ubiquitination and degradation of NF1, thereby regulating Ras protein signal transduction. As part of the ECS(ASB9) complex, catalyzes ubiquitination and degradation of CKB. The ECS(SPSB3) complex catalyzes ubiquitination of nuclear CGAS. As part of the ECS(RAB40C) complex, mediates ANKRD28 ubiquitination and degradation, thereby inhibiting protein phosphatase 6 (PP6) complex activity and focal adhesion assembly during cell migration. As part of some ECS complex, catalyzes 'Lys-11'-linked ubiquitination and degradation of BTRC. ECS complexes and ARIH2 collaborate in tandem to mediate ubiquitination of target proteins; ARIH2 mediating addition of the first ubiquitin on CRLs targets. Specifically catalyzes the neddylation of CUL5 via its interaction with UBE2F. Does not catalyze neddylation of other cullins (CUL1, CUL2, CUL3, CUL4A or CUL4B). May play a role in protecting cells from apoptosis induced by redox agents. The polypeptide is RING-box protein 2 (Mus musculus (Mouse)).